A 341-amino-acid polypeptide reads, in one-letter code: Holliday junction branch migration complex subunit RuvB (341 aa).

Residues 1 to 180 are large ATPase domain (RuvB-L); the sequence is MAKSHTLNPE…FGIQLRLDYY (180 aa). Residues L19, R20, G61, K64, T65, T66, R170, Y180, and R217 each coordinate ATP. T65 provides a ligand contact to Mg(2+). The tract at residues 181-251 is small ATPAse domain (RuvB-S); sequence NDEEMKEIVL…LCLKAFEKMG (71 aa). Residues 254-341 are head domain (RuvB-H); that stretch reads DLGLDGMDRQ…ENHGQDPTLF (88 aa). DNA is bound by residues R309 and R314.

Belongs to the RuvB family. In terms of assembly, homohexamer. Forms an RuvA(8)-RuvB(12)-Holliday junction (HJ) complex. HJ DNA is sandwiched between 2 RuvA tetramers; dsDNA enters through RuvA and exits via RuvB. An RuvB hexamer assembles on each DNA strand where it exits the tetramer. Each RuvB hexamer is contacted by two RuvA subunits (via domain III) on 2 adjacent RuvB subunits; this complex drives branch migration. In the full resolvosome a probable DNA-RuvA(4)-RuvB(12)-RuvC(2) complex forms which resolves the HJ.

The protein localises to the cytoplasm. The enzyme catalyses ATP + H2O = ADP + phosphate + H(+). In terms of biological role, the RuvA-RuvB-RuvC complex processes Holliday junction (HJ) DNA during genetic recombination and DNA repair, while the RuvA-RuvB complex plays an important role in the rescue of blocked DNA replication forks via replication fork reversal (RFR). RuvA specifically binds to HJ cruciform DNA, conferring on it an open structure. The RuvB hexamer acts as an ATP-dependent pump, pulling dsDNA into and through the RuvAB complex. RuvB forms 2 homohexamers on either side of HJ DNA bound by 1 or 2 RuvA tetramers; 4 subunits per hexamer contact DNA at a time. Coordinated motions by a converter formed by DNA-disengaged RuvB subunits stimulates ATP hydrolysis and nucleotide exchange. Immobilization of the converter enables RuvB to convert the ATP-contained energy into a lever motion, pulling 2 nucleotides of DNA out of the RuvA tetramer per ATP hydrolyzed, thus driving DNA branch migration. The RuvB motors rotate together with the DNA substrate, which together with the progressing nucleotide cycle form the mechanistic basis for DNA recombination by continuous HJ branch migration. Branch migration allows RuvC to scan DNA until it finds its consensus sequence, where it cleaves and resolves cruciform DNA. The sequence is that of Holliday junction branch migration complex subunit RuvB from Leptospira borgpetersenii serovar Hardjo-bovis (strain L550).